Reading from the N-terminus, the 657-residue chain is Methionine--tRNA ligase (657 aa).

Residues 13–23 carry the 'HIGH' region motif; it reads YYPSGNLHIGH. The short motif at 308–312 is the 'KMSKS' region element; sequence KMSKS. Lys311 lines the ATP pocket. Residues 557 to 657 form the tRNA-binding domain; sequence DFDKVEIKAA…SAIPNGAVIK (101 aa).

Belongs to the class-I aminoacyl-tRNA synthetase family. MetG type 2B subfamily. Homodimer.

The protein localises to the cytoplasm. It catalyses the reaction tRNA(Met) + L-methionine + ATP = L-methionyl-tRNA(Met) + AMP + diphosphate. Functionally, is required not only for elongation of protein synthesis but also for the initiation of all mRNA translation through initiator tRNA(fMet) aminoacylation. The sequence is that of Methionine--tRNA ligase from Staphylococcus aureus (strain Mu50 / ATCC 700699).